The primary structure comprises 62 residues: Defensin BmKDfsin6 (62 aa).

The first 24 residues, 1–24, serve as a signal peptide directing secretion; the sequence is MKVIAILFLLAFVLCTMEITMVEA. 3 disulfide bridges follow: C28–C49, C35–C57, and C39–C59.

This sequence belongs to the invertebrate defensin family. Type 2 subfamily. As to expression, highly expressed in non-venom gland (hemolymph) and moderately expressed in venom gland.

The protein localises to the secreted. Its function is as follows. Antibacterial peptide active against Gram-positive bacteria, but not on Gram-negative bacteria. Also has weak blocking activity on Kv1.1/KCNA1, Kv1.2/KCNA2, Kv1.3/KCNA3, KCa3.1/KCNN4/IK, KCa2.3/KCNN3/SK3 and Kv11.1/KCNH2/ERG1 channels (tested at 1 uM). It inhibits potassium channel current by interacting with the pore region. This chain is Defensin BmKDfsin6, found in Olivierus martensii (Manchurian scorpion).